The following is a 182-amino-acid chain: Kappa-casein (182 aa).

A signal peptide spans 1-20 (MKSFLLVVNALALTLPFLAV). O-linked (GalNAc...) threonine glycans are attached at residues Thr133, Thr143, Thr148, and Thr151. Phosphothreonine; alternate is present on Thr157. Thr157 is a glycosylation site (O-linked (GalNAc...) threonine; alternate). 3 O-linked (GalNAc...) threonine glycosylation sites follow: Thr167, Thr169, and Thr178.

The protein belongs to the kappa-casein family. As to quaternary structure, heteromultimers composed of alpha-s1 casein and kappa casein linked by disulfide bonds. In terms of processing, the N-terminus is blocked. In terms of tissue distribution, mammary gland specific. Secreted in milk.

It is found in the secreted. In terms of biological role, kappa-casein stabilizes micelle formation, preventing casein precipitation in milk. This Homo sapiens (Human) protein is Kappa-casein (CSN3).